Reading from the N-terminus, the 190-residue chain is Dynactin subunit 6 (190 aa).

The residue at position 186 (Thr-186) is a Phosphothreonine; by CDK1.

It belongs to the dynactin subunits 5/6 family. Dynactin subunit 6 subfamily. In terms of assembly, subunit of dynactin, a multiprotein complex part of a tripartite complex with dynein and a adapter, such as BICDL1, BICD2 or HOOK3. The dynactin complex is built around ACTR1A/ACTB filament and consists of an actin-related filament composed of a shoulder domain, a pointed end and a barbed end. Its length is defined by its flexible shoulder domain. The soulder is composed of 2 DCTN1 subunits, 4 DCTN2 and 2 DCTN3. The 4 DCNT2 (via N-terminus) bind the ACTR1A filament and act as molecular rulers to determine the length. The pointed end is important for binding dynein-dynactin cargo adapters. Consists of 4 subunits: ACTR10, DCNT4, DCTN5 and DCTN6. Within the complex DCTN6 forms a heterodimer with DCTN5. The barbed end is composed of a CAPZA1:CAPZB heterodimers, which binds ACTR1A/ACTB filament and dynactin and stabilizes dynactin. Interacts with PLK1. Interacts with N4BP2L1. In terms of processing, phosphorylation at Thr-186 by CDK1 during mitotic prometaphase creates a binding site for PLK1 that facilitates its recruitment to kinetochores.

The protein localises to the cytoplasm. It localises to the cytoskeleton. Its subcellular location is the chromosome. It is found in the centromere. The protein resides in the kinetochore. Functionally, part of the dynactin complex that activates the molecular motor dynein for ultra-processive transport along microtubules. This is Dynactin subunit 6 (DCTN6) from Pongo abelii (Sumatran orangutan).